The following is a 208-amino-acid chain: High frequency lysogenization protein HflD homolog (208 aa).

This sequence belongs to the HflD family.

It is found in the cytoplasm. It localises to the cell inner membrane. In Yersinia enterocolitica serotype O:8 / biotype 1B (strain NCTC 13174 / 8081), this protein is High frequency lysogenization protein HflD homolog.